We begin with the raw amino-acid sequence, 490 residues long: Beta-N-acetyl-D-glucosaminide beta-1,4-N-acetylglucosaminyl-transferase (490 aa).

The Cytoplasmic portion of the chain corresponds to 1–30 (MYLVVCWGRVTGNMISTRHCFSRCKSRSVR). A helical; Signal-anchor for type II membrane protein membrane pass occupies residues 31 to 50 (VIKATAMLFVAAMLFLALHM). N-linked (GlcNAc...) asparagine glycosylation is found at asparagine 51, asparagine 82, asparagine 441, asparagine 459, and asparagine 485. Over 51–490 (NFSHEASQQN…YLTGNFTIIS (440 aa)) the chain is Lumenal.

The protein belongs to the glycosyltransferase 7 family.

It is found in the golgi apparatus membrane. The catalysed reaction is an N-acetyl-beta-D-glucosaminyl derivative + UDP-N-acetyl-alpha-D-glucosamine = an N-acetyl-beta-D-glucosaminyl-(1-&gt;4)-N-acetyl-beta-D-glucosaminyl derivative + UDP + H(+). It participates in protein modification; protein glycosylation. In Lymnaea stagnalis (Great pond snail), this protein is Beta-N-acetyl-D-glucosaminide beta-1,4-N-acetylglucosaminyl-transferase (GNT).